The chain runs to 321 residues: MTIAFGPVPSRRLGKSLGINSIPCKFCSYDCVYCQVGRTINKTIERREFYSPEDIFKSVEERIGKLNNEKIDYLTFVADGEPTLDINLSKEVEMLRDFDIPIAIITNSSLIWREDVRNDILNFDLVSFKVDSVDEKIWREINRPHKDLVLDKILEGMIAFRDNYKGELITETMILGSIKYTEESIIKTAEFLKELNPNKCYLNTPIRPPSEKYIKPPKIEVITKILAIFNEIIGKNKIKLLGKFEGNEFIFSENVEEDILAITSVHPMREEVIKELLNKSNISFDIINKMVNEGKLIKLEYDGKVFYMKNIKSRDKNVSNP.

The 226-residue stretch at 11 to 236 (RRLGKSLGIN…AIFNEIIGKN (226 aa)) folds into the Radical SAM core domain. 3 residues coordinate [4Fe-4S] cluster: cysteine 27, cysteine 31, and cysteine 34.

It belongs to the UPF0026 family. [4Fe-4S] cluster serves as cofactor.

The sequence is that of UPF0026 protein MJ1312 from Methanocaldococcus jannaschii (strain ATCC 43067 / DSM 2661 / JAL-1 / JCM 10045 / NBRC 100440) (Methanococcus jannaschii).